The chain runs to 239 residues: Suppressor of organelle fusion 1 (239 aa).

It belongs to the WD repeat WDR91 family. In terms of assembly, interacts with sorf-2; the interaction is direct. Interacts with bec-1.

It localises to the early endosome. Its subcellular location is the late endosome. The protein resides in the cytoplasm. Functionally, together with sorf-2 negatively regulates the levels of phosphatidylinositol 3-phosphate (PtdIns3P) to enable the conversion of early endosomes to late endosomes. Binds to sorf-2 and the sorf-1-sorf-2 complex likely acts through bec-1, a non-catalytic subunit of phosphatidylinositol 3-kinase (PI3K), to suppress PI3K activity, thereby negatively regulating endosomal PtdIns3P levels. This is Suppressor of organelle fusion 1 from Caenorhabditis elegans.